The chain runs to 253 residues: Probable transcriptional regulatory protein RBE_0568 (253 aa).

Residues 1–21 form a disordered region; that stretch reads MAGHSKFKNIQHRKGAQDKKR.

It belongs to the TACO1 family.

It is found in the cytoplasm. The chain is Probable transcriptional regulatory protein RBE_0568 from Rickettsia bellii (strain RML369-C).